The following is a 593-amino-acid chain: UvrABC system protein C (593 aa).

The 78-residue stretch at 14-91 (DSPGCYLHKD…IQENMPKYNI (78 aa)) folds into the GIY-YIG domain. The UVR domain maps to 196-231 (NKIVNGLTEKMKSAAMTMEFERAAEYRDLIEAISLL).

This sequence belongs to the UvrC family. In terms of assembly, interacts with UvrB in an incision complex.

The protein localises to the cytoplasm. The UvrABC repair system catalyzes the recognition and processing of DNA lesions. UvrC both incises the 5' and 3' sides of the lesion. The N-terminal half is responsible for the 3' incision and the C-terminal half is responsible for the 5' incision. The polypeptide is UvrABC system protein C (Streptococcus agalactiae serotype V (strain ATCC BAA-611 / 2603 V/R)).